A 64-amino-acid chain; its full sequence is Large ribosomal subunit protein bL33 (64 aa).

It belongs to the bacterial ribosomal protein bL33 family.

The sequence is that of Large ribosomal subunit protein bL33 from Picosynechococcus sp. (strain ATCC 27264 / PCC 7002 / PR-6) (Agmenellum quadruplicatum).